The sequence spans 368 residues: MSKPRTRVAVIFGGRSNEHSVSCVSAGSVLRNLDPERYEVVPIGITTEGSWVLGSTDPESLSIRGRSLPSVDADGSALALTADPTRSGDLVALDDGEAGKILASVDVVFPVLHGAYGEDGTIQGLLELAGVPYVGPGVLASAAGMDKEFTKKLLAAEGLPIGFQVVLRPGTATLTDEQRSRLHLPVFVKPARGGSSIGITRVAEWAALDDAIAHARRHDPKVIVESGIAGREVECGVLEFPDGDVRASVIAEIRMPEGADDDEAFYDFDSKYLDDVCEFDVPAKLEDSVSDEIRALAVRAFSALDCQGLARVDFFVTEDGPVINEINTMPGFTSISMYPRMWDAVGVDYGTLVSTLVDTALARGTGLR.

Positions 151 to 358 (KKLLAAEGLP…YGTLVSTLVD (208 aa)) constitute an ATP-grasp domain. Position 179–234 (179–234 (RSRLHLPVFVKPARGGSSIGITRVAEWAALDDAIAHARRHDPKVIVESGIAGREVE)) interacts with ATP. Residues Asp313, Glu325, and Asn327 each coordinate Mg(2+).

This sequence belongs to the D-alanine--D-alanine ligase family. Requires Mg(2+) as cofactor. It depends on Mn(2+) as a cofactor.

The protein resides in the cytoplasm. It carries out the reaction 2 D-alanine + ATP = D-alanyl-D-alanine + ADP + phosphate + H(+). Its pathway is cell wall biogenesis; peptidoglycan biosynthesis. Cell wall formation. In Rhodococcus opacus (strain B4), this protein is D-alanine--D-alanine ligase.